The chain runs to 549 residues: TBC1 domain family member 3L (549 aa).

The Rab-GAP TBC domain maps to 101–293 (GMPMNIRGPM…RLWDVYLVEG (193 aa)). Residues C318 and C325 are each lipidated (S-palmitoyl cysteine). Residues 350–423 (LTRKQGDLQP…TPCPGGAVRE (74 aa)) form a disordered region. A compositionally biased stretch (low complexity) spans 398 to 417 (PRPIWSASPPRAPRSSTPCP).

In terms of processing, ubiquitinated by a CUL7-based E3 ligase, which leads to proteasomal degradation. Palmitoylation is required for membrane localization and protects TBC1D3 from ubiquitination.

The protein localises to the cell membrane. Functionally, acts as a GTPase activating protein for RAB5. Does not act on RAB4 or RAB11. This is TBC1 domain family member 3L from Homo sapiens (Human).